The chain runs to 179 residues: MNETLKEELLQSIREVKDYPKKGILFKDITTLLNYPKLFNKLIDALKKRYLALNIDFIVGIEARGFILGSALAYALGVGFVPVRKKGKLPAHTLSQSYSLEYGSDSIEIHSDAFRGIKGVRVVLIDDLLATGGTALASLELIKALQAECIEACFLMGLKELPGIQLLEERVKTFCLLEC.

The protein belongs to the purine/pyrimidine phosphoribosyltransferase family. In terms of assembly, homodimer.

The protein localises to the cytoplasm. The enzyme catalyses AMP + diphosphate = 5-phospho-alpha-D-ribose 1-diphosphate + adenine. The protein operates within purine metabolism; AMP biosynthesis via salvage pathway; AMP from adenine: step 1/1. Catalyzes a salvage reaction resulting in the formation of AMP, that is energically less costly than de novo synthesis. In Helicobacter pylori (strain G27), this protein is Adenine phosphoribosyltransferase.